The sequence spans 37 residues: Mastoparan-VT (37 aa).

A propeptide spanning residues 1–22 (EALADPIADPVAGPNPEADPEA) is cleaved from the precursor. AXPX repeat units follow at residues 4–7 (ADPI), 8–11 (ADPV), 12–15 (AGPN), and 18–21 (ADPE). Leucine amide is present on L36.

This sequence belongs to the MCD family. Mastoparan subfamily. As to expression, expressed by the venom gland.

Its subcellular location is the secreted. It is found in the target cell membrane. Antimicrobial peptide with potent activity against both Gram-positive (S.aureus MIC=50 ug/ml, and B.subtilis MIC=25 ug/ml) and Gram-negative bacteria (P.aeruginosa MIC=25 ug/ml, E.coli MIC=3-50 ug/ml, K.pneumoniae MIC=25 ug/ml). Exhibits little hemolytic activity on human erythrocytes. The protein is Mastoparan-VT of Vespa tropica (Greater banded hornet).